Consider the following 124-residue polypeptide: Small ribosomal subunit protein uS12c (124 aa).

The segment at 105-124 (AGVKDRRQSRSKYGAKRPKA) is disordered. Basic residues predominate over residues 113–124 (SRSKYGAKRPKA).

This sequence belongs to the universal ribosomal protein uS12 family. In terms of assembly, part of the 30S ribosomal subunit.

The protein localises to the plastid. The protein resides in the cyanelle. Functionally, with S4 and S5 plays an important role in translational accuracy. Located at the interface of the 30S and 50S subunits. This Cyanophora paradoxa protein is Small ribosomal subunit protein uS12c (rps12).